The chain runs to 390 residues: Phosphopentomutase (390 aa).

Positions 9, 283, 288, 324, 325, and 336 each coordinate Mn(2+).

It belongs to the phosphopentomutase family. It depends on Mn(2+) as a cofactor.

Its subcellular location is the cytoplasm. It catalyses the reaction 2-deoxy-alpha-D-ribose 1-phosphate = 2-deoxy-D-ribose 5-phosphate. It carries out the reaction alpha-D-ribose 1-phosphate = D-ribose 5-phosphate. Its pathway is carbohydrate degradation; 2-deoxy-D-ribose 1-phosphate degradation; D-glyceraldehyde 3-phosphate and acetaldehyde from 2-deoxy-alpha-D-ribose 1-phosphate: step 1/2. Functionally, isomerase that catalyzes the conversion of deoxy-ribose 1-phosphate (dRib-1-P) and ribose 1-phosphate (Rib-1-P) to deoxy-ribose 5-phosphate (dRib-5-P) and ribose 5-phosphate (Rib-5-P), respectively. This Thermotoga petrophila (strain ATCC BAA-488 / DSM 13995 / JCM 10881 / RKU-1) protein is Phosphopentomutase.